Reading from the N-terminus, the 684-residue chain is Probable potassium transport system protein Kup (684 aa).

12 consecutive transmembrane segments (helical) span residues A19–M39, V61–L81, W104–P124, Q151–T171, A177–L197, M223–S243, L255–L275, L303–G323, L352–F372, A381–L401, P407–I427, and F433–V453.

It belongs to the HAK/KUP transporter (TC 2.A.72) family.

The protein localises to the cell membrane. It catalyses the reaction K(+)(in) + H(+)(in) = K(+)(out) + H(+)(out). Its function is as follows. Transport of potassium into the cell. Likely operates as a K(+):H(+) symporter. This is Probable potassium transport system protein Kup from Lacticaseibacillus paracasei (strain ATCC 334 / BCRC 17002 / CCUG 31169 / CIP 107868 / KCTC 3260 / NRRL B-441) (Lactobacillus paracasei).